The chain runs to 175 residues: Large ribosomal subunit protein uL10 (175 aa).

It belongs to the universal ribosomal protein uL10 family. As to quaternary structure, part of the ribosomal stalk of the 50S ribosomal subunit. The N-terminus interacts with L11 and the large rRNA to form the base of the stalk. The C-terminus forms an elongated spine to which L12 dimers bind in a sequential fashion forming a multimeric L10(L12)X complex.

Its function is as follows. Forms part of the ribosomal stalk, playing a central role in the interaction of the ribosome with GTP-bound translation factors. In Cupriavidus taiwanensis (strain DSM 17343 / BCRC 17206 / CCUG 44338 / CIP 107171 / LMG 19424 / R1) (Ralstonia taiwanensis (strain LMG 19424)), this protein is Large ribosomal subunit protein uL10.